Here is a 193-residue protein sequence, read N- to C-terminus: MTFLFIVITLLALIFGAILGFASIKLKVEADPVVEKIDAILPQSQCGQCGYPGCKPYAEAICNGDEITKCIPGGQTTIVKIAEILGVDVPTMEGIEEPIEKVAFIDENMCIGCTKCIQACPVDAIIGTNKAMHTIIPDLCTGCELCVAPCPTDCILMIPVKKNIDNWDWKFDAKLVIPVMNVDGSEKKLVVGE.

Residues 1–23 (MTFLFIVITLLALIFGAILGFAS) are hydrophobic. The 4Fe-4S domain maps to 29–87 (EADPVVEKIDAILPQSQCGQCGYPGCKPYAEAICNGDEITKCIPGGQTTIVKIAEILGV). Positions 46, 49, 54, 70, 110, 113, 116, 120, 140, 143, 146, and 150 each coordinate [4Fe-4S] cluster. 4Fe-4S ferredoxin-type domains lie at 101-130 (KVAF…GTNK) and 131-160 (AMHT…MIPV).

This sequence belongs to the 4Fe4S bacterial-type ferredoxin family. RnfB subfamily. The complex is composed of six subunits: RnfA, RnfB, RnfC, RnfD, RnfE and RnfG. The cofactor is [4Fe-4S] cluster.

The protein resides in the cell inner membrane. Functionally, part of a membrane-bound complex that couples electron transfer with translocation of ions across the membrane. The polypeptide is Ion-translocating oxidoreductase complex subunit B (Haemophilus influenzae (strain 86-028NP)).